A 509-amino-acid chain; its full sequence is Histidine--tRNA ligase, cytoplasmic (509 aa).

A2 bears the N-acetylalanine mark. The WHEP-TRS domain occupies 3–59 (DRAALEELVRLQGAHVRGLKEQKASAEQIEEEVTKLLKLKAQLGQDEGKQKFVLKTP). At S66 the chain carries Phosphoserine. Residues 130-132 (DLT), R157, Q173, D177, R326, and 330-331 (YY) each bind L-histidine. S356 is subject to Phosphoserine.

The protein belongs to the class-II aminoacyl-tRNA synthetase family. As to quaternary structure, homodimer.

It is found in the cytoplasm. The catalysed reaction is tRNA(His) + L-histidine + ATP = L-histidyl-tRNA(His) + AMP + diphosphate + H(+). Functionally, catalyzes the ATP-dependent ligation of histidine to the 3'-end of its cognate tRNA, via the formation of an aminoacyl-adenylate intermediate (His-AMP). Plays a role in axon guidance. In Mus musculus (Mouse), this protein is Histidine--tRNA ligase, cytoplasmic (Hars1).